Here is a 283-residue protein sequence, read N- to C-terminus: Aldo-keto reductase MSMEG_2407/MSMEI_2346 (283 aa).

Y58 acts as the Proton donor in catalysis. NADPH contacts are provided by G196, L198, V200, I236, R238, S239, A240, R244, S247, N248, and R274.

This sequence belongs to the aldo/keto reductase family. As to quaternary structure, monomer.

Inhibited by the antituberculosis drug isoniazid (INH). Functionally, catalyzes the NADPH-dependent reduction of dicarbonyls. Exhibits narrow substrate specificity, with preferential activity against the dicarbonyl substrates phenylglyoxal and methylglyoxal. Exhibits weak activity with ethyl-2-methyl acetoacetate. Cannot use NADH. May play an important role in the detoxification of methylglyoxal. This is Aldo-keto reductase MSMEG_2407/MSMEI_2346 from Mycolicibacterium smegmatis (strain ATCC 700084 / mc(2)155) (Mycobacterium smegmatis).